We begin with the raw amino-acid sequence, 617 residues long: Phenylalanine--tRNA ligase beta subunit (617 aa).

The region spanning Ile-306–Lys-383 is the B5 domain. Residues Asp-361, Asp-367, Glu-370, and Asp-371 each coordinate Mg(2+).

The protein belongs to the phenylalanyl-tRNA synthetase beta subunit family. Type 2 subfamily. Tetramer of two alpha and two beta subunits. Mg(2+) is required as a cofactor.

The protein localises to the cytoplasm. It carries out the reaction tRNA(Phe) + L-phenylalanine + ATP = L-phenylalanyl-tRNA(Phe) + AMP + diphosphate + H(+). The protein is Phenylalanine--tRNA ligase beta subunit (phesB) of Dictyostelium discoideum (Social amoeba).